The following is a 189-amino-acid chain: Peptidyl-tRNA hydrolase (189 aa).

Tyr15 lines the tRNA pocket. The active-site Proton acceptor is the His20. The tRNA site is built by Phe66, Asn68, and Asn114.

It belongs to the PTH family. In terms of assembly, monomer.

It is found in the cytoplasm. It carries out the reaction an N-acyl-L-alpha-aminoacyl-tRNA + H2O = an N-acyl-L-amino acid + a tRNA + H(+). Functionally, hydrolyzes ribosome-free peptidyl-tRNAs (with 1 or more amino acids incorporated), which drop off the ribosome during protein synthesis, or as a result of ribosome stalling. Its function is as follows. Catalyzes the release of premature peptidyl moieties from peptidyl-tRNA molecules trapped in stalled 50S ribosomal subunits, and thus maintains levels of free tRNAs and 50S ribosomes. This Streptococcus sanguinis (strain SK36) protein is Peptidyl-tRNA hydrolase.